The sequence spans 376 residues: 5-amino-6-(D-ribitylamino)uracil--L-tyrosine 4-hydroxyphenyl transferase 1 (376 aa).

Positions 50-284 (VTYVVNRNIN…AISRILLHGH (235 aa)) constitute a Radical SAM core domain. [4Fe-4S] cluster-binding residues include C64, C68, and C71.

This sequence belongs to the radical SAM superfamily. CofH family. In terms of assembly, consists of two subunits, CofG and CofH. The cofactor is [4Fe-4S] cluster.

It catalyses the reaction 5-amino-6-(D-ribitylamino)uracil + L-tyrosine + S-adenosyl-L-methionine = 5-amino-5-(4-hydroxybenzyl)-6-(D-ribitylimino)-5,6-dihydrouracil + 2-iminoacetate + 5'-deoxyadenosine + L-methionine + H(+). The protein operates within cofactor biosynthesis; coenzyme F0 biosynthesis. In terms of biological role, catalyzes the radical-mediated synthesis of 5-amino-5-(4-hydroxybenzyl)-6-(D-ribitylimino)-5,6-dihydrouracil from 5-amino-6-(D-ribitylamino)uracil and L-tyrosine. In Methanosarcina barkeri (strain Fusaro / DSM 804), this protein is 5-amino-6-(D-ribitylamino)uracil--L-tyrosine 4-hydroxyphenyl transferase 1.